The chain runs to 347 residues: Phosphate acyltransferase (347 aa).

The protein belongs to the PlsX family. In terms of assembly, homodimer. Probably interacts with PlsY.

The protein localises to the cytoplasm. The enzyme catalyses a fatty acyl-[ACP] + phosphate = an acyl phosphate + holo-[ACP]. It participates in lipid metabolism; phospholipid metabolism. In terms of biological role, catalyzes the reversible formation of acyl-phosphate (acyl-PO(4)) from acyl-[acyl-carrier-protein] (acyl-ACP). This enzyme utilizes acyl-ACP as fatty acyl donor, but not acyl-CoA. The sequence is that of Phosphate acyltransferase from Oleidesulfovibrio alaskensis (strain ATCC BAA-1058 / DSM 17464 / G20) (Desulfovibrio alaskensis).